The chain runs to 131 residues: Synaptobrevin-like protein (131 aa).

The Cytoplasmic segment spans residues 1–81 (MLHITTMTDK…KRKFWWKNCK (81 aa)). The v-SNARE coiled-coil homology domain maps to 18–78 (RLQQTQAQVN…GKLKRKFWWK (61 aa)). Residues 82–102 (MLAVLGVLVVILIIVLIVWVV) form a helical; Anchor for type IV membrane protein membrane-spanning segment. Residues 103-131 (SEQKNKVEQSEHSSHHLVMDNSSHLLSEQ) are Vesicular-facing. Residues 112–131 (SEHSSHHLVMDNSSHLLSEQ) form a disordered region. A compositionally biased stretch (polar residues) spans 122 to 131 (DNSSHLLSEQ).

It belongs to the synaptobrevin family.

The protein resides in the cytoplasmic vesicle. It localises to the secretory vesicle. Its subcellular location is the synaptic vesicle membrane. The protein localises to the synapse. It is found in the synaptosome. Functionally, unknown, but synaptobrevins are presumed to be involved in targeting and fusion of synaptic vesicles with the presynaptic membrane as well as in neurotransmitter release. In Schistosoma mansoni (Blood fluke), this protein is Synaptobrevin-like protein.